An 88-amino-acid polypeptide reads, in one-letter code: Phosphocarrier protein HPr (88 aa).

Positions 1–88 (MAEKTFKVVS…DTLAKEGLAE (88 aa)) constitute an HPr domain. Residue S12 is modified to Phosphoserine. Catalysis depends on H15, which acts as the Pros-phosphohistidine intermediate. S46 is modified (phosphoserine; by HPrK/P).

Belongs to the HPr family.

The protein resides in the cytoplasm. Its activity is regulated as follows. Phosphorylation on Ser-46 inhibits the phosphoryl transfer from enzyme I to HPr. In terms of biological role, general (non sugar-specific) component of the phosphoenolpyruvate-dependent sugar phosphotransferase system (sugar PTS). This major carbohydrate active-transport system catalyzes the phosphorylation of incoming sugar substrates concomitantly with their translocation across the cell membrane. The phosphoryl group from phosphoenolpyruvate (PEP) is transferred to the phosphoryl carrier protein HPr by enzyme I. Phospho-HPr then transfers it to the PTS EIIA domain. Functionally, P-Ser-HPr interacts with the catabolite control protein A (CcpA), forming a complex that binds to DNA at the catabolite response elements cre, operator sites preceding a large number of catabolite-regulated genes. Thus, P-Ser-HPr is a corepressor in carbon catabolite repression (CCR), a mechanism that allows bacteria to coordinate and optimize the utilization of available carbon sources. P-Ser-HPr also plays a role in inducer exclusion, in which it probably interacts with several non-PTS permeases and inhibits their transport activity. This Geobacillus stearothermophilus (Bacillus stearothermophilus) protein is Phosphocarrier protein HPr (ptsH).